The sequence spans 293 residues: Ribosomal RNA small subunit methyltransferase H (293 aa).

Residues 32–34 (GGH), Asp-51, Phe-78, Asp-99, and Gln-106 each bind S-adenosyl-L-methionine. Positions 274-293 (DEIRENPASRSAKMRVARRL) are disordered.

The protein belongs to the methyltransferase superfamily. RsmH family.

It localises to the cytoplasm. It catalyses the reaction cytidine(1402) in 16S rRNA + S-adenosyl-L-methionine = N(4)-methylcytidine(1402) in 16S rRNA + S-adenosyl-L-homocysteine + H(+). Its function is as follows. Specifically methylates the N4 position of cytidine in position 1402 (C1402) of 16S rRNA. The sequence is that of Ribosomal RNA small subunit methyltransferase H from Sulfurihydrogenibium azorense (strain DSM 15241 / OCM 825 / Az-Fu1).